The following is a 262-amino-acid chain: 3-methyl-2-oxobutanoate hydroxymethyltransferase (262 aa).

2 residues coordinate Mg(2+): aspartate 42 and aspartate 81. 3-methyl-2-oxobutanoate is bound by residues 42–43 (DS), aspartate 81, and lysine 110. Glutamate 112 contributes to the Mg(2+) binding site. The active-site Proton acceptor is the glutamate 180.

Belongs to the PanB family. Homodecamer; pentamer of dimers. It depends on Mg(2+) as a cofactor.

It localises to the cytoplasm. It catalyses the reaction 3-methyl-2-oxobutanoate + (6R)-5,10-methylene-5,6,7,8-tetrahydrofolate + H2O = 2-dehydropantoate + (6S)-5,6,7,8-tetrahydrofolate. Its pathway is cofactor biosynthesis; (R)-pantothenate biosynthesis; (R)-pantoate from 3-methyl-2-oxobutanoate: step 1/2. Catalyzes the reversible reaction in which hydroxymethyl group from 5,10-methylenetetrahydrofolate is transferred onto alpha-ketoisovalerate to form ketopantoate. The protein is 3-methyl-2-oxobutanoate hydroxymethyltransferase of Legionella pneumophila (strain Lens).